The sequence spans 104 residues: Large ribosomal subunit protein bL21 (104 aa).

It belongs to the bacterial ribosomal protein bL21 family. In terms of assembly, part of the 50S ribosomal subunit. Contacts protein L20.

This protein binds to 23S rRNA in the presence of protein L20. The chain is Large ribosomal subunit protein bL21 from Thermotoga sp. (strain RQ2).